Reading from the N-terminus, the 326-residue chain is Serpentine receptor class alpha-12 (326 aa).

Residues 1 to 17 (MSCASEVQAQLFTHPVQ) are Extracellular-facing. The helical transmembrane segment at 18 to 38 (IIYACVQTVLFLATIIGSLLA) threads the bilayer. At 39–54 (IVQLCKKTTIPDSTKV) the chain is on the cytoplasmic side. A helical transmembrane segment spans residues 55–75 (LLIGALFFANAHELAYFSSPF). Residues 76–101 (KVFKMNLFHTNTSCYPLASTLECIPT) are Extracellular-facing. A helical transmembrane segment spans residues 102–122 (TTVLAMGISGNMLIQSALSIF). Topologically, residues 123–138 (RLLATIFPVCYSRMRA) are cytoplasmic. The helical transmembrane segment at 139 to 159 (LPGVVLLFMVLIPSFLSYSWI) threads the bilayer. Topologically, residues 160 to 185 (RSDIVLDDYQMFCSQWSANISSRANT) are extracellular. The helical transmembrane segment at 186 to 206 (YLEYCSYLTVAHIIINALIIL) threads the bilayer. The Cytoplasmic segment spans residues 207-234 (RNRSVESKCRFDVQQRYLNSETLKTTQT). Residues 235 to 255 (ICYLSIAQFLAMFLYSGGVLF) form a helical membrane-spanning segment. Residues 256-270 (MRKNQKNIPTLIYIN) lie on the Extracellular side of the membrane. Residues 271–291 (VIVWVYAPPYACVSLAPLILF) form a helical membrane-spanning segment. Topologically, residues 292–326 (SLWNLKKQRQIRIQSITVQKETQEDHIRKLQLSWG) are cytoplasmic.

This sequence belongs to the nematode receptor-like protein sra family.

It localises to the membrane. In Caenorhabditis briggsae, this protein is Serpentine receptor class alpha-12.